Consider the following 432-residue polypeptide: MEKITLAPISRVEGEINLPGSKSLSNRALLLAALAKGTTKVTNLLDSDDIRHMLNALKALGVNYSLSEDKTVCTVEGVGGAFNWKNGLALFLGNAGTAMRPLTAALCLKGATEAEVVLTGEPRMKERPIKHLVDALRQAGASVQYLENEGYPPVAIRNSGLKGGKVQIDGSISSQFLTALLMAAPLAEGDMEIEIIGELVSKPYIDITLAMMKDFGVKVENRNYQTFVVKGNQSYLSPEKYLVEGDASSASYFLAAGAIKGKVKVTGIGKNSIQGDRLFANVLEAMGAKITWGDDFIQAEQGKLKGVDMDMNHIPDAAMTIATAALFAEGETVIRNIYNWRVKETDRLTAMATELRKVGATVEEGEDFIRIQPLPLTQFQHAEIATYNDHRMAMCFSLIALSDTPVTILDPKCTAKTFPTYFTEFEKLSERT.

The 3-phosphoshikimate site is built by lysine 22, serine 23, and arginine 27. Lysine 22 is a phosphoenolpyruvate binding site. Residues glycine 96 and arginine 127 each coordinate phosphoenolpyruvate. 7 residues coordinate 3-phosphoshikimate: serine 173, serine 174, glutamine 175, serine 201, aspartate 316, asparagine 339, and lysine 343. Glutamine 175 contributes to the phosphoenolpyruvate binding site. Aspartate 316 acts as the Proton acceptor in catalysis. Residues arginine 347, arginine 391, and lysine 416 each coordinate phosphoenolpyruvate.

Belongs to the EPSP synthase family. Monomer.

It localises to the cytoplasm. It catalyses the reaction 3-phosphoshikimate + phosphoenolpyruvate = 5-O-(1-carboxyvinyl)-3-phosphoshikimate + phosphate. It participates in metabolic intermediate biosynthesis; chorismate biosynthesis; chorismate from D-erythrose 4-phosphate and phosphoenolpyruvate: step 6/7. Its function is as follows. Catalyzes the transfer of the enolpyruvyl moiety of phosphoenolpyruvate (PEP) to the 5-hydroxyl of shikimate-3-phosphate (S3P) to produce enolpyruvyl shikimate-3-phosphate and inorganic phosphate. In Actinobacillus pleuropneumoniae serotype 7 (strain AP76), this protein is 3-phosphoshikimate 1-carboxyvinyltransferase.